The chain runs to 193 residues: Holliday junction branch migration complex subunit RuvA (193 aa).

Positions 1–64 are domain I; the sequence is MIGRIAGTLL…EDAHLLYGFL (64 aa). The domain II stretch occupies residues 65-139; the sequence is TPPERSTFRE…GKLGADLGPL (75 aa). The segment at 139 to 143 is flexible linker; it reads LAGAA. The segment at 144 to 193 is domain III; the sequence is SPSDHATDILNALVALGYSEKEALAAIKNVPAGTGVSEGIKLSLKALSKA.

Belongs to the RuvA family. In terms of assembly, homotetramer. Forms an RuvA(8)-RuvB(12)-Holliday junction (HJ) complex. HJ DNA is sandwiched between 2 RuvA tetramers; dsDNA enters through RuvA and exits via RuvB. An RuvB hexamer assembles on each DNA strand where it exits the tetramer. Each RuvB hexamer is contacted by two RuvA subunits (via domain III) on 2 adjacent RuvB subunits; this complex drives branch migration. In the full resolvosome a probable DNA-RuvA(4)-RuvB(12)-RuvC(2) complex forms which resolves the HJ.

The protein resides in the cytoplasm. In terms of biological role, the RuvA-RuvB-RuvC complex processes Holliday junction (HJ) DNA during genetic recombination and DNA repair, while the RuvA-RuvB complex plays an important role in the rescue of blocked DNA replication forks via replication fork reversal (RFR). RuvA specifically binds to HJ cruciform DNA, conferring on it an open structure. The RuvB hexamer acts as an ATP-dependent pump, pulling dsDNA into and through the RuvAB complex. HJ branch migration allows RuvC to scan DNA until it finds its consensus sequence, where it cleaves and resolves the cruciform DNA. This Burkholderia mallei (strain NCTC 10229) protein is Holliday junction branch migration complex subunit RuvA.